Here is an 82-residue protein sequence, read N- to C-terminus: Ice-structuring protein A (82 aa).

An N-terminal signal peptide occupies residues 1–23; sequence MALSLFTVGQLIFLFWTMRITEA. The propeptide at 24-44 is removed by a dipeptidylpeptidase; the sequence is SPDPAAKAAPAAAAAPAAAAP. Arginine amide is present on R81.

The protein belongs to the type-I AFP family. Detected in liver and in blood serum (at protein level).

Its subcellular location is the secreted. Its function is as follows. Contributes to protect fish blood from freezing at subzero sea water temperatures. Lowers the blood freezing point. Binds to nascent ice crystals and prevents further growth. The protein is Ice-structuring protein A of Pseudopleuronectes americanus (Winter flounder).